The following is a 228-amino-acid chain: Delta-type opioid receptor (228 aa).

A helical membrane pass occupies residues 1 to 3; it reads GIV. The Cytoplasmic portion of the chain corresponds to 4-13; sequence RYTKMKTATN. Residues 14-38 traverse the membrane as a helical segment; the sequence is IYIFNLALADALATSTLPFQSAKYL. Residues 39-50 lie on the Extracellular side of the membrane; that stretch reads METWPFGELLCK. Cysteines 49 and 126 form a disulfide. A helical membrane pass occupies residues 51–72; that stretch reads AVLSIDYYNMFTSIFTLTMMSV. Over 73–91 the chain is Cytoplasmic; that stretch reads DRYIAVCHPVKALDFRTPA. Residues 92 to 114 form a helical membrane-spanning segment; it reads KAKLINICIWVLASGVGVPIMVM. Topologically, residues 115-134 are extracellular; sequence AVTRPRDGAVVCMLQFPSPS. The chain crosses the membrane as a helical span at residues 135–166; it reads WYWDTVTKICVFLFAFVVPILVITVCYGLMLL. At 167–189 the chain is on the cytoplasmic side; the sequence is RLRSVRLLSGSKEKDRSLRRITR. Residues 190–212 traverse the membrane as a helical segment; it reads MVLVVVGAFVVCWAPIHIFVIVW. Topologically, residues 213–227 are extracellular; sequence TLVDIDRRDPLVVAA.

It belongs to the G-protein coupled receptor 1 family. As to quaternary structure, may form homooligomers. Forms a heterodimer with OPRM1. Interacts with GPRASP1. Interacts with RTP4; the interaction promotes cell surface localization of the OPRD1-OPRM1 heterodimer. In terms of processing, ubiquitinated. A basal ubiquitination seems not to be related to degradation. Ubiquitination is increased upon formation of OPRM1:OPRD1 oligomers leading to proteasomal degradation; the ubiquitination is diminished by RTP4. Detected in myenteric plexus and smooth muscle (at protein level). Detected in brain and intestine.

It localises to the cell membrane. Functionally, G-protein coupled receptor that functions as a receptor for endogenous enkephalins and for a subset of other opioids. Ligand binding causes a conformation change that triggers signaling via guanine nucleotide-binding proteins (G proteins) and modulates the activity of down-stream effectors, such as adenylate cyclase. Signaling leads to the inhibition of adenylate cyclase activity. Inhibits neurotransmitter release by reducing calcium ion currents and increasing potassium ion conductance. Plays a role in the perception of pain and in opiate-mediated analgesia. Plays a role in developing analgesic tolerance to morphine. This chain is Delta-type opioid receptor (OPRD1), found in Sus scrofa (Pig).